The following is an 87-amino-acid chain: uncharacterized protein (87 aa).

A disordered region spans residues 52-87; the sequence is KWQPRPDANNSDTTTSTEDSTTDTETEYSTTEDELA. The segment covering 71–87 has biased composition (acidic residues); it reads STTDTETEYSTTEDELA.

This is an uncharacterized protein from Autographa californica nuclear polyhedrosis virus (AcMNPV).